Reading from the N-terminus, the 448-residue chain is Beta-glucosidase A (448 aa).

Glu166 acts as the Proton donor in catalysis. The active-site Nucleophile is Glu352.

The protein belongs to the glycosyl hydrolase 1 family. Homooctamer.

It carries out the reaction Hydrolysis of terminal, non-reducing beta-D-glucosyl residues with release of beta-D-glucose.. In terms of biological role, bglA is intracellular and cleaves cellobiose probably through inorganic phosphate mediated hydrolysis. In Paenibacillus polymyxa (Bacillus polymyxa), this protein is Beta-glucosidase A (bglA).